We begin with the raw amino-acid sequence, 497 residues long: Protein adenylyltransferase Fic (497 aa).

Residues 1–30 form a disordered region; the sequence is MGATDQALEAESKTTEPPKTPPVPEQHDRP. The chain crosses the membrane as a helical span at residues 38–58; that stretch reads LCHLLVLLFSGGLAAITLHIF. TPR repeat units lie at residues 123-156 and 157-191; these read ALGA…APRH and PTVL…SPSN. Positions 248–253 match the Inhibitory (S/T)XXXE(G/N) motif motif; the sequence is TVGIEG. ATP contacts are provided by residues Glu252 and 333 to 336; that span reads VGGH. Positions 302 to 437 constitute a Fido domain; sequence ITIKDILELH…IRPFVRFIAD (136 aa). His380 is a catalytic residue. ATP-binding positions include 384–391, 416–417, and Asn424; these read DGNGRTSR and YY. The segment at 468–497 is disordered; the sequence is GEGVPQLQSSQMGGGASIPEFHESGSGSLP.

It belongs to the fic family. As to quaternary structure, homodimer.

It localises to the membrane. The catalysed reaction is L-tyrosyl-[protein] + ATP = O-(5'-adenylyl)-L-tyrosyl-[protein] + diphosphate. It catalyses the reaction L-threonyl-[protein] + ATP = 3-O-(5'-adenylyl)-L-threonyl-[protein] + diphosphate. The enzyme catalyses 3-O-(5'-adenylyl)-L-threonyl-[protein] + H2O = L-threonyl-[protein] + AMP + H(+). With respect to regulation, the side chain of Glu-252 determines which of the two opposing activities (AMPylase or de-AMPylase) will take place. In response to endoplasmic reticulum stress, mediates de-AMPylase activity. Adenylyltransferase activity is inhibited by the inhibitory helix present at the N-terminus: Glu-252 binds ATP and competes with ATP-binding at Arg-391, thereby preventing adenylyltransferase activity. In unstressed cells, disengagement of Glu-252 promotes adenylyltransferase activity. Activation dissociates ATP-binding from Glu-252, allowing ordered binding of the entire ATP moiety with the alpha-phosphate in an orientation that is productive for accepting an incoming target hydroxyl side chain. Its function is as follows. Protein that can both mediate the addition of adenosine 5'-monophosphate (AMP) to specific residues of target proteins (AMPylation), and the removal of the same modification from target proteins (de-AMPylation), depending on the context. The side chain of Glu-252 determines which of the two opposing activities (AMPylase or de-AMPylase) will take place. Acts as a key regulator of the unfolded protein response (UPR) by mediating AMPylation or de-AMPylation of Hsc70-3/BiP. In unstressed cells, acts as an adenylyltransferase by mediating AMPylation of Hsc70-3/BiP at 'Thr-518', thereby inactivating it. In response to endoplasmic reticulum stress, acts as a phosphodiesterase by mediating removal of ATP (de-AMPylation) from Hsc70-3/BiP at 'Thr-518', leading to restore HSPA5/BiP activity. The sequence is that of Protein adenylyltransferase Fic from Drosophila ananassae (Fruit fly).